The sequence spans 172 residues: Phosphopantetheine adenylyltransferase (172 aa).

Residue Thr-14 coordinates substrate. ATP contacts are provided by residues Thr-14–Phe-15 and His-22. 3 residues coordinate substrate: Lys-46, Leu-78, and Arg-92. ATP-binding positions include Gly-93–Arg-95, Glu-103, and Trp-128–Thr-134.

It belongs to the bacterial CoaD family. In terms of assembly, homohexamer. The cofactor is Mg(2+).

The protein resides in the cytoplasm. The enzyme catalyses (R)-4'-phosphopantetheine + ATP + H(+) = 3'-dephospho-CoA + diphosphate. Its pathway is cofactor biosynthesis; coenzyme A biosynthesis; CoA from (R)-pantothenate: step 4/5. Reversibly transfers an adenylyl group from ATP to 4'-phosphopantetheine, yielding dephospho-CoA (dPCoA) and pyrophosphate. In Lawsonia intracellularis (strain PHE/MN1-00), this protein is Phosphopantetheine adenylyltransferase.